The following is a 940-amino-acid chain: Isoleucine--tRNA ligase (940 aa).

The 'HIGH' region signature appears at 58–68 (PYANGSIHIGH). Position 564 (E564) interacts with L-isoleucyl-5'-AMP. The short motif at 605-609 (KMSKS) is the 'KMSKS' region element. Position 608 (K608) interacts with ATP. Zn(2+) contacts are provided by C903, C906, C923, and C926.

This sequence belongs to the class-I aminoacyl-tRNA synthetase family. IleS type 1 subfamily. As to quaternary structure, monomer. The cofactor is Zn(2+).

It is found in the cytoplasm. The enzyme catalyses tRNA(Ile) + L-isoleucine + ATP = L-isoleucyl-tRNA(Ile) + AMP + diphosphate. Its function is as follows. Catalyzes the attachment of isoleucine to tRNA(Ile). As IleRS can inadvertently accommodate and process structurally similar amino acids such as valine, to avoid such errors it has two additional distinct tRNA(Ile)-dependent editing activities. One activity is designated as 'pretransfer' editing and involves the hydrolysis of activated Val-AMP. The other activity is designated 'posttransfer' editing and involves deacylation of mischarged Val-tRNA(Ile). In Shewanella sp. (strain MR-7), this protein is Isoleucine--tRNA ligase.